Reading from the N-terminus, the 251-residue chain is 1-(5-phosphoribosyl)-5-[(5-phosphoribosylamino)methylideneamino] imidazole-4-carboxamide isomerase (251 aa).

Asp-8 serves as the catalytic Proton acceptor. Asp-131 serves as the catalytic Proton donor.

Belongs to the HisA/HisF family.

It localises to the cytoplasm. The enzyme catalyses 1-(5-phospho-beta-D-ribosyl)-5-[(5-phospho-beta-D-ribosylamino)methylideneamino]imidazole-4-carboxamide = 5-[(5-phospho-1-deoxy-D-ribulos-1-ylimino)methylamino]-1-(5-phospho-beta-D-ribosyl)imidazole-4-carboxamide. Its pathway is amino-acid biosynthesis; L-histidine biosynthesis; L-histidine from 5-phospho-alpha-D-ribose 1-diphosphate: step 4/9. This is 1-(5-phosphoribosyl)-5-[(5-phosphoribosylamino)methylideneamino] imidazole-4-carboxamide isomerase from Thiobacillus denitrificans (strain ATCC 25259 / T1).